A 111-amino-acid chain; its full sequence is UPF0060 membrane protein XAC3064 (111 aa).

4 helical membrane passes run 8–28 (LLLFAATALAELVGCYLPYLW), 32–52 (GGSVWLLLPTALSLAVFVWLL), 64–84 (AAYGGVYIASALLWLWWVDGV), and 91–111 (LLGAACCLLGMAVIMFSPRSA).

The protein belongs to the UPF0060 family.

The protein resides in the cell inner membrane. This chain is UPF0060 membrane protein XAC3064, found in Xanthomonas axonopodis pv. citri (strain 306).